A 529-amino-acid chain; its full sequence is Ectonucleoside triphosphate diphosphohydrolase 3 (529 aa).

Residues 1-22 lie on the Cytoplasmic side of the membrane; sequence MFTVLTRQPCEQAGLKALYRTP. A helical membrane pass occupies residues 23–43; the sequence is TIIALVVLLVSIVVLVSITVI. At 44 to 485 the chain is on the extracellular side; that stretch reads QIHKQEVLPP…PLIRLPIEPP (442 aa). Asparagine 81 is a glycosylation site (N-linked (GlcNAc...) asparagine). Cysteines 92 and 116 form a disulfide. The N-linked (GlcNAc...) asparagine glycan is linked to asparagine 149. The active-site Proton acceptor is glutamate 182. An ATP-binding site is contributed by 222–226; sequence GASTQ. N-linked (GlcNAc...) asparagine glycosylation is present at asparagine 238. Disulfide bonds link cysteine 261-cysteine 308, cysteine 289-cysteine 334, and cysteine 347-cysteine 353. Asparagine 381, asparagine 392, asparagine 402, and asparagine 454 each carry an N-linked (GlcNAc...) asparagine glycan. A disulfide bond links cysteine 399 and cysteine 422. The helical transmembrane segment at 486–506 threads the bilayer; it reads VFVGTLAFFTAAALLCLAFLA. Residues 507 to 529 lie on the Cytoplasmic side of the membrane; that stretch reads YLCSATRRKRHSEHAFDHAVDSD.

This sequence belongs to the GDA1/CD39 NTPase family. Ca(2+) serves as cofactor. Requires Mg(2+) as cofactor. As to expression, expressed in adult brain, pancreas, spleen and prostate. Moderate or low expression is seen in most tissues. Not expressed in liver and peripheral blood leukocytes.

The protein localises to the cell membrane. The enzyme catalyses a ribonucleoside 5'-triphosphate + 2 H2O = a ribonucleoside 5'-phosphate + 2 phosphate + 2 H(+). In terms of biological role, has a threefold preference for the hydrolysis of ATP over ADP. The chain is Ectonucleoside triphosphate diphosphohydrolase 3 (ENTPD3) from Homo sapiens (Human).